The sequence spans 274 residues: NAD kinase (274 aa).

Catalysis depends on aspartate 59, which acts as the Proton acceptor. Residues 59–60, 133–134, arginine 144, aspartate 163, 174–179, and glutamine 233 each bind NAD(+); these read DG, ND, and TAYALS.

This sequence belongs to the NAD kinase family. It depends on a divalent metal cation as a cofactor.

Its subcellular location is the cytoplasm. It carries out the reaction NAD(+) + ATP = ADP + NADP(+) + H(+). In terms of biological role, involved in the regulation of the intracellular balance of NAD and NADP, and is a key enzyme in the biosynthesis of NADP. Catalyzes specifically the phosphorylation on 2'-hydroxyl of the adenosine moiety of NAD to yield NADP. The protein is NAD kinase of Aquifex aeolicus (strain VF5).